We begin with the raw amino-acid sequence, 305 residues long: Cell division control protein 2 homolog C (305 aa).

The Protein kinase domain maps to 4 to 297 (YEKLEKVGEG…AKAALDHPYF (294 aa)). Residues 10-18 (VGEGTYGKV) and Lys-33 contribute to the ATP site. Residue Thr-14 is modified to Phosphothreonine. Tyr-15 is modified (phosphotyrosine). Asp-138 functions as the Proton acceptor in the catalytic mechanism. Position 172 is a phosphothreonine; by CAK (Thr-172).

This sequence belongs to the protein kinase superfamily. CMGC Ser/Thr protein kinase family. CDC2/CDKX subfamily.

The enzyme catalyses L-seryl-[protein] + ATP = O-phospho-L-seryl-[protein] + ADP + H(+). The catalysed reaction is L-threonyl-[protein] + ATP = O-phospho-L-threonyl-[protein] + ADP + H(+). It catalyses the reaction [DNA-directed RNA polymerase] + ATP = phospho-[DNA-directed RNA polymerase] + ADP + H(+). Functionally, plays a key role in the control of the eukaryotic cell cycle. This is Cell division control protein 2 homolog C (CDC2C) from Antirrhinum majus (Garden snapdragon).